We begin with the raw amino-acid sequence, 267 residues long: 4-hydroxy-tetrahydrodipicolinate reductase (267 aa).

Residues 8–13 (GAAGRM) and E34 each bind NAD(+). R35 contacts NADP(+). Residues 98–100 (GST) and 122–125 (APNM) each bind NAD(+). Residue H155 is the Proton donor/acceptor of the active site. Residue H156 participates in (S)-2,3,4,5-tetrahydrodipicolinate binding. Residue K159 is the Proton donor of the active site. 165-166 (GT) contributes to the (S)-2,3,4,5-tetrahydrodipicolinate binding site.

Belongs to the DapB family.

It is found in the cytoplasm. It catalyses the reaction (S)-2,3,4,5-tetrahydrodipicolinate + NAD(+) + H2O = (2S,4S)-4-hydroxy-2,3,4,5-tetrahydrodipicolinate + NADH + H(+). It carries out the reaction (S)-2,3,4,5-tetrahydrodipicolinate + NADP(+) + H2O = (2S,4S)-4-hydroxy-2,3,4,5-tetrahydrodipicolinate + NADPH + H(+). It functions in the pathway amino-acid biosynthesis; L-lysine biosynthesis via DAP pathway; (S)-tetrahydrodipicolinate from L-aspartate: step 4/4. Its function is as follows. Catalyzes the conversion of 4-hydroxy-tetrahydrodipicolinate (HTPA) to tetrahydrodipicolinate. In Geotalea daltonii (strain DSM 22248 / JCM 15807 / FRC-32) (Geobacter daltonii), this protein is 4-hydroxy-tetrahydrodipicolinate reductase.